A 740-amino-acid polypeptide reads, in one-letter code: Ethylene receptor 1 (740 aa).

Helical transmembrane passes span 23–43 (ISDF…IYFV), 54–74 (VLVQ…INLW), and 92–112 (VLTA…IPDL). Cu cation is bound by residues C65 and H69. Positions 158–307 (DRHTILKTTL…VVADQVAVAL (150 aa)) constitute a GAF domain. The 239-residue stretch at 350-588 (VMNHEMRTPM…TFIVKLGIAD (239 aa)) folds into the Histidine kinase domain. H353 bears the Phosphohistidine; by autocatalysis mark. The Response regulatory domain maps to 614–731 (KVLVMDDNGV…KMRSVLSELI (118 aa)). D662 carries the post-translational modification 4-aspartylphosphate.

It belongs to the ethylene receptor family. Homodimer; disulfide-linked. It depends on Cu cation as a cofactor. In terms of processing, activation probably requires a transfer of a phosphate group between a His in the transmitter domain and an Asp of the receiver domain. In terms of tissue distribution, in seeds and placenta.

Its subcellular location is the endoplasmic reticulum membrane. The enzyme catalyses ATP + protein L-histidine = ADP + protein N-phospho-L-histidine.. In terms of biological role, may act early in the ethylene signal transduction pathway, possibly as an ethylene receptor, or as a regulator of the pathway. The sequence is that of Ethylene receptor 1 (ETR1) from Cucumis melo var. cantalupensis (Netted muskmelon).